The chain runs to 527 residues: Cytokinin dehydrogenase 6 (527 aa).

The first 22 residues, 1–22, serve as a signal peptide directing secretion; it reads MAARCSIAFMVMASCLSVVVSG. The FAD-binding PCMH-type domain maps to 55–236; the sequence is VAAAPEAVLH…TRARIGLEPA (182 aa). The FAD site is built by glycine 91 and glycine 93. At histidine 94 the chain carries Pros-8alpha-FAD histidine. FAD-binding residues include serine 95 and glutamine 99. Asparagine 121 is a glycosylation site (N-linked (GlcNAc...) asparagine). FAD is bound by residues aspartate 160, threonine 165, serine 171, isoleucine 175, and isoleucine 226. 2 N-linked (GlcNAc...) asparagine glycosylation sites follow: asparagine 280 and asparagine 323. Tyrosine 475, serine 510, and glutamine 513 together coordinate FAD.

Belongs to the oxygen-dependent FAD-linked oxidoreductase family. In terms of assembly, monomer. FAD is required as a cofactor.

It is found in the secreted. The protein localises to the extracellular space. The enzyme catalyses N(6)-dimethylallyladenine + A + H2O = 3-methyl-2-butenal + adenine + AH2. Its function is as follows. Catalyzes the oxidation of cytokinins, a family of N(6)-substituted adenine derivatives that are plant hormones, where the substituent is an isopentenyl group. The polypeptide is Cytokinin dehydrogenase 6 (CKX6) (Oryza sativa subsp. japonica (Rice)).